We begin with the raw amino-acid sequence, 217 residues long: MSQPATHSDAEPATRLVLEQLSCERDDRLLFSGLSFTASAGEIWQITGANGAGKTTLLRILVGLHGFYEGERQWWQPQWQQQLLYLGHEPGVREELNPLENLRYACALSQQGGDPMAALAAVGLQGFEEVPAAHLSAGQKRRIALARLWLDRKAVWVLDEPYTAIDQDGVAALDQQIQQAAEAGTLVIYTSHHQVGDGVRRLHLAHGQAEVTEGGRV.

Residues 16–214 (LVLEQLSCER…AHGQAEVTEG (199 aa)) form the ABC transporter domain. 48–55 (GANGAGKT) is a binding site for ATP.

This sequence belongs to the ABC transporter superfamily. CcmA exporter (TC 3.A.1.107) family. As to quaternary structure, the complex is composed of two ATP-binding proteins (CcmA) and two transmembrane proteins (CcmB).

Its subcellular location is the cell inner membrane. The enzyme catalyses heme b(in) + ATP + H2O = heme b(out) + ADP + phosphate + H(+). In terms of biological role, part of the ABC transporter complex CcmAB involved in the biogenesis of c-type cytochromes; once thought to export heme, this seems not to be the case, but its exact role is uncertain. Responsible for energy coupling to the transport system. This Alcanivorax borkumensis (strain ATCC 700651 / DSM 11573 / NCIMB 13689 / SK2) protein is Cytochrome c biogenesis ATP-binding export protein CcmA.